A 61-amino-acid chain; its full sequence is Large ribosomal subunit protein uL30 (61 aa).

Belongs to the universal ribosomal protein uL30 family. As to quaternary structure, part of the 50S ribosomal subunit.

The protein is Large ribosomal subunit protein uL30 of Neisseria meningitidis serogroup C (strain 053442).